Consider the following 107-residue polypeptide: uncharacterized protein (107 aa).

2 helical membrane passes run tyrosine 14–tryptophan 34 and phenylalanine 68–isoleucine 88.

The protein localises to the cell membrane. This is an uncharacterized protein from Haemophilus influenzae (strain ATCC 51907 / DSM 11121 / KW20 / Rd).